We begin with the raw amino-acid sequence, 718 residues long: Homeobox-leucine zipper protein HDG9 (718 aa).

Over residues 1 to 12 (MDFTRDDNSSDE) the composition is skewed to basic and acidic residues. The tract at residues 1-35 (MDFTRDDNSSDERENDVDANTNNRHEKKGYHRHTN) is disordered. The segment at residues 26–85 (EKKGYHRHTNEQIHRLETYFKECPHPDEFQRRLLGEELNLKPKQIKFWFQNKRTQAKSHN) is a DNA-binding region (homeobox). Positions 78-152 (RTQAKSHNEK…LKDEYERVSN (75 aa)) form a coiled coil. Residues 169–209 (PYLHGPSNHASTSKNRPALYGTSSNRLPEPSSIFRGPYTRG) are disordered. A compositionally biased stretch (polar residues) spans 176-194 (NHASTSKNRPALYGTSSNR). Positions 232–464 (SQLEKIAMLE…LERTCERLIF (233 aa)) constitute an START domain.

Belongs to the HD-ZIP homeobox family. Class IV subfamily. Expressed in anthers with highest levels in the tapetum and pollen grains, and chalazal end of the embryo sac.

The protein resides in the nucleus. Probable transcription factor that binds to the DNA sequence 5'-GCATTAAATGCGCA-3'. This is Homeobox-leucine zipper protein HDG9 (HDG9) from Arabidopsis thaliana (Mouse-ear cress).